Reading from the N-terminus, the 316-residue chain is MKKEAIILLNMGGPNNLEEVEVFLTNMFNDKNIITVKSSLLRKLIATLITFSRTEKSQEIYNQIGGKSPIVGHTKKLVEKLQNRVGENIIVDFAMRYTPPFVSEAIERLSDKNIEKIYLIPLYPQYSTTTTKSSLEDFEEQYHLSSGDAILVEIKHFFQNKNYNMAILERIKERVSLEEMSEFDLIFSAHGLPLKVIQRGDTYQLHVQKHISILEQMMQKEGMTFKNIHLAYQSKVGPMEWLKPSLEDKLREIKNRKVIIFPIAFTIDNSETDYELEIEYREVAHEMGYEEYRVCRCPNDSEYFVEALVDIYAKMR.

Histidine 190 and glutamate 271 together coordinate Fe cation.

It belongs to the ferrochelatase family.

It localises to the cytoplasm. The catalysed reaction is heme b + 2 H(+) = protoporphyrin IX + Fe(2+). It functions in the pathway porphyrin-containing compound metabolism; protoheme biosynthesis; protoheme from protoporphyrin-IX: step 1/1. In terms of biological role, catalyzes the ferrous insertion into protoporphyrin IX. This chain is Ferrochelatase, found in Sulfurimonas denitrificans (strain ATCC 33889 / DSM 1251) (Thiomicrospira denitrificans (strain ATCC 33889 / DSM 1251)).